Here is a 220-residue protein sequence, read N- to C-terminus: Adenylate kinase (220 aa).

10 to 15 contributes to the ATP binding site; that stretch reads GSGKST. Residues 30–59 form an NMP region; the sequence is SSGDLIRKEIAEGTPLGREMQAYLARGDLI. AMP is bound by residues Ser31, Arg36, 57–59, 83–86, and Gln90; these read DLI and GYPR. Residues 124–161 form an LID region; that stretch reads GRRICPKCGAVYHVEFNPPKIPGRCDVCGAELVQREDD. An ATP-binding site is contributed by Arg125. Zn(2+)-binding residues include Cys128 and Cys131. 134–135 provides a ligand contact to ATP; that stretch reads VY. Positions 148 and 151 each coordinate Zn(2+). The AMP site is built by Arg158 and Arg169. Residue Gly197 coordinates ATP.

The protein belongs to the adenylate kinase family. Monomer.

It localises to the cytoplasm. The enzyme catalyses AMP + ATP = 2 ADP. It participates in purine metabolism; AMP biosynthesis via salvage pathway; AMP from ADP: step 1/1. Functionally, catalyzes the reversible transfer of the terminal phosphate group between ATP and AMP. Plays an important role in cellular energy homeostasis and in adenine nucleotide metabolism. The sequence is that of Adenylate kinase from Pyrococcus furiosus (strain ATCC 43587 / DSM 3638 / JCM 8422 / Vc1).